Reading from the N-terminus, the 555-residue chain is Glutamate--tRNA ligase (555 aa).

A 'HIGH' region motif is present at residues 100–110 (PNPSGPLHIGH).

Belongs to the class-I aminoacyl-tRNA synthetase family. Glutamate--tRNA ligase type 2 subfamily.

It localises to the cytoplasm. The enzyme catalyses tRNA(Glu) + L-glutamate + ATP = L-glutamyl-tRNA(Glu) + AMP + diphosphate. Catalyzes the attachment of glutamate to tRNA(Glu) in a two-step reaction: glutamate is first activated by ATP to form Glu-AMP and then transferred to the acceptor end of tRNA(Glu). The sequence is that of Glutamate--tRNA ligase from Methanococcus maripaludis (strain C7 / ATCC BAA-1331).